We begin with the raw amino-acid sequence, 156 residues long: SsrA-binding protein (156 aa).

Residues 135–156 (HALRERQDRREADRAMSERKDR) are disordered.

This sequence belongs to the SmpB family.

Its subcellular location is the cytoplasm. Required for rescue of stalled ribosomes mediated by trans-translation. Binds to transfer-messenger RNA (tmRNA), required for stable association of tmRNA with ribosomes. tmRNA and SmpB together mimic tRNA shape, replacing the anticodon stem-loop with SmpB. tmRNA is encoded by the ssrA gene; the 2 termini fold to resemble tRNA(Ala) and it encodes a 'tag peptide', a short internal open reading frame. During trans-translation Ala-aminoacylated tmRNA acts like a tRNA, entering the A-site of stalled ribosomes, displacing the stalled mRNA. The ribosome then switches to translate the ORF on the tmRNA; the nascent peptide is terminated with the 'tag peptide' encoded by the tmRNA and targeted for degradation. The ribosome is freed to recommence translation, which seems to be the essential function of trans-translation. The protein is SsrA-binding protein of Kineococcus radiotolerans (strain ATCC BAA-149 / DSM 14245 / SRS30216).